An 893-amino-acid chain; its full sequence is Valine--tRNA ligase (893 aa).

The 'HIGH' region motif lies at 57 to 67; it reads PNVTGTLHMGH. Positions 545–549 match the 'KMSKS' region motif; it reads KMSKS. Lys548 contacts ATP. Residues 821-855 adopt a coiled-coil conformation; it reads TSGSVDLEAERKRLEKDLAAAQKELATTEGKLGNE.

It belongs to the class-I aminoacyl-tRNA synthetase family. ValS type 1 subfamily. Monomer.

It is found in the cytoplasm. It catalyses the reaction tRNA(Val) + L-valine + ATP = L-valyl-tRNA(Val) + AMP + diphosphate. In terms of biological role, catalyzes the attachment of valine to tRNA(Val). As ValRS can inadvertently accommodate and process structurally similar amino acids such as threonine, to avoid such errors, it has a 'posttransfer' editing activity that hydrolyzes mischarged Thr-tRNA(Val) in a tRNA-dependent manner. This chain is Valine--tRNA ligase, found in Nocardia farcinica (strain IFM 10152).